The primary structure comprises 224 residues: Large ribosomal subunit protein bL25 (224 aa).

This sequence belongs to the bacterial ribosomal protein bL25 family. CTC subfamily. In terms of assembly, part of the 50S ribosomal subunit; part of the 5S rRNA/L5/L18/L25 subcomplex. Contacts the 5S rRNA. Binds to the 5S rRNA independently of L5 and L18.

In terms of biological role, this is one of the proteins that binds to the 5S RNA in the ribosome where it forms part of the central protuberance. The chain is Large ribosomal subunit protein bL25 from Psychrobacter arcticus (strain DSM 17307 / VKM B-2377 / 273-4).